The sequence spans 513 residues: Serine/threonine-protein phosphatase T (513 aa).

TPR repeat units lie at residues 12 to 45, 46 to 79, and 80 to 113; these read ALERKNEGNVFVKEKHFLKAIEKYTEAIDLDSTQ, SIYFSNRAFAHFKVDNFQSALNDCDEAIKLDPKN, and IKAYHRRALSCMALLEFKKARKDLNVLLKAKPND. Positions 188–513 are catalytic; sequence KNMSQEFISK…MAYSNGGFGL (326 aa). The Mn(2+) site is built by D249, H251, D278, and N310. The active-site Proton donor/acceptor is the H311. 2 residues coordinate Mn(2+): H359 and H434.

The protein belongs to the PPP phosphatase family. PP-5 (PP-T) subfamily. Interacts (via TPR repeats) with HSP82 (via C-terminal MEEVD pentapeptide). Requires Mg(2+) as cofactor. It depends on Mn(2+) as a cofactor.

The protein resides in the nucleus. It catalyses the reaction O-phospho-L-seryl-[protein] + H2O = L-seryl-[protein] + phosphate. The enzyme catalyses O-phospho-L-threonyl-[protein] + H2O = L-threonyl-[protein] + phosphate. With respect to regulation, stimulated by arachidonic acid and other unsaturated fatty acids, and by arachidoyl coenzyme A. In terms of biological role, protein phosphatase that specifically binds to and dephosphorylates the molecular chaperone Hsp90 (HSC82 and HSP82). Dephosphorylation positively regulates the Hsp90 chaperone machinery. The sequence is that of Serine/threonine-protein phosphatase T (PPT1) from Saccharomyces cerevisiae (strain ATCC 204508 / S288c) (Baker's yeast).